The primary structure comprises 116 residues: Large ribosomal subunit protein bL19 (116 aa).

This sequence belongs to the bacterial ribosomal protein bL19 family.

In terms of biological role, this protein is located at the 30S-50S ribosomal subunit interface and may play a role in the structure and function of the aminoacyl-tRNA binding site. This is Large ribosomal subunit protein bL19 from Shewanella loihica (strain ATCC BAA-1088 / PV-4).